Reading from the N-terminus, the 1183-residue chain is Protein deacetylase HDAC6 (1183 aa).

The disordered stretch occupies residues 1–61 (MTSTGQDSST…KGKMKKLSQP (61 aa)). Polar residues predominate over residues 18 to 29 (NPQSPLQDSSAT). Ser21 carries the phosphoserine modification. At Arg32 the chain carries Omega-N-methylarginine. A Nuclear export signal motif is present at residues 66-75 (LIVGLQGLDL). Histone deacetylase stretches follow at residues 86–434 (GLVF…TLLG) and 512–830 (GLVY…SLLG). His215 acts as the 1 in catalysis. His641 acts as the 2 in catalysis. A disordered region spans residues 972-1042 (ATENSANQTT…EAQEVQESEE (71 aa)). Low complexity predominate over residues 980-996 (TTSGEEASGETESFGTS). 3 positions are modified to phosphothreonine: Thr990, Thr995, and Thr1005. The span at 997-1008 (PSSNASKQTTGA) shows a compositional bias: polar residues. The residue at position 1009 (Ser1009) is a Phosphoserine. Residues 1021–1035 (ELGLSSTLELSSEAQ) are compositionally biased toward low complexity. Residues 1079–1177 (SWCPHLMAVC…NAAHQNKFGE (99 aa)) form a UBP-type zinc finger. 7 residues coordinate Zn(2+): Cys1081, His1083, Cys1101, Cys1104, Cys1113, Cys1116, and Cys1121. The ubiquitin binding stretch occupies residues 1122–1124 (SRY). Residues His1128, His1132, His1138, Cys1151, and Cys1154 each contribute to the Zn(2+) site. The segment at 1150–1157 (WCYLCQAY) is ubiquitin binding.

Belongs to the histone deacetylase family. HD type 2 subfamily. In terms of assembly, forms a trimeric complex in the nucleus consisting of BANP, HDAC6 and KHDRBS1/SAM68; HDAC6 keeps KHDRBS1 in a deacetylated state which inhibits the inclusion of CD44 alternate exons. The complex is disrupted by MAPK1/MAPK3-mediated phosphorylation of BANP which results in BANP export to the cytoplasm. This facilitates acetylation of KHDRBS1 and CD44 variant exon inclusion. Interacts with SIRT2 (via both phosphorylated, unphosphorylated, active or inactive forms); the interaction is necessary for the complex to interact with alpha-tubulin. Under proteasome impairment conditions, interacts with UBD via its histone deacetylase 1 and UBP-type zinc-finger regions. Interacts with BBIP1, CBFA2T3, CYLD, DDIT3/CHOP, ZMYND15, F-actin and HDAC11. Interacts with RIPOR2; this interaction occurs during early myogenic differentiation and prevents HDAC6 to deacetylate tubulin. Interacts with AURKA; AURKA-mediated phosphorylation of HDAC6 promotes deacetylation of alpha-tubulin. Interacts with DYSF; this interaction occurs during early myogenic differentiation. Interacts with TPPP; inhibiting the tubulin deacetylase activity of HDAC6. Interacts with DYNLL1. Interacts with ATP13A2; the interaction results in recruitment of HDAC6 to lysosomes to promote CTTN deacetylation. Interacts with CCDC141 (via the N-terminal region); inhibiting the deacetylase activity of HDAC6. Interacts with IPO7; the interaction facilitates HDAC6 nuclear translocation in dental papilla cells. Requires Zn(2+) as cofactor. Post-translationally, phosphorylated by AURKA; phosphorylation increases HDAC6-mediated deacetylation of alpha-tubulin and subsequent disassembly of cilia. Ubiquitinated. Its polyubiquitination however does not lead to its degradation. In terms of processing, sumoylated in vitro.

It is found in the cytoplasm. Its subcellular location is the cytoskeleton. The protein localises to the nucleus. The protein resides in the perikaryon. It localises to the cell projection. It is found in the dendrite. Its subcellular location is the axon. The protein localises to the cilium. The protein resides in the microtubule organizing center. It localises to the centrosome. It is found in the cilium basal body. It catalyses the reaction N(6)-acetyl-L-lysyl-[protein] + H2O = L-lysyl-[protein] + acetate. The enzyme catalyses N(6)-acetyl-L-lysyl-[alpha-tubulin] + H2O = L-lysyl-[alpha-tubulin] + acetate. It functions in the pathway protein modification; protein ubiquitination. In terms of biological role, deacetylates a wide range of non-histone substrates. Plays a central role in microtubule-dependent cell motility by mediating deacetylation of tubulin. Required for cilia disassembly via deacetylation of alpha-tubulin. Alpha-tubulin deacetylation results in destabilization of dynamic microtubules. Promotes deacetylation of CTTN, leading to actin polymerization, promotion of autophagosome-lysosome fusion and completion of autophagy. Deacetylates SQSTM1. Deacetylates peroxiredoxins PRDX1 and PRDX2, decreasing their reducing activity. Deacetylates antiviral protein RIGI in the presence of viral mRNAs which is required for viral RNA detection by RIGI. Sequentially deacetylates and polyubiquitinates DNA mismatch repair protein MSH2 which leads to MSH2 degradation, reducing cellular sensitivity to DNA-damaging agents and decreasing cellular DNA mismatch repair activities. Deacetylates DNA mismatch repair protein MLH1 which prevents recruitment of the MutL alpha complex (formed by the MLH1-PMS2 heterodimer) to the MutS alpha complex (formed by the MSH2-MSH6 heterodimer), leading to tolerance of DNA damage. Deacetylates RHOT1/MIRO1 which blocks mitochondrial transport and mediates axon growth inhibition. Deacetylates transcription factor SP1 which leads to increased expression of ENG, positively regulating angiogenesis. Deacetylates KHDRBS1/SAM68 which regulates alternative splicing by inhibiting the inclusion of CD44 alternate exons. Promotes odontoblast differentiation following IPO7-mediated nuclear import and subsequent repression of RUNX2 expression. In addition to its protein deacetylase activity, plays a key role in the degradation of misfolded proteins: when misfolded proteins are too abundant to be degraded by the chaperone refolding system and the ubiquitin-proteasome, mediates the transport of misfolded proteins to a cytoplasmic juxtanuclear structure called aggresome. Probably acts as an adapter that recognizes polyubiquitinated misfolded proteins and targets them to the aggresome, facilitating their clearance by autophagy. This Rattus norvegicus (Rat) protein is Protein deacetylase HDAC6.